A 614-amino-acid polypeptide reads, in one-letter code: Glucose oxidase 1 (614 aa).

The signal sequence occupies residues 1 to 15 (MKSIILSCFVISAAA). FAD is bound by residues leucine 52, threonine 53, and glutamate 73. Asparagine 112 carries N-linked (GlcNAc...) asparagine glycosylation. The interval 117 to 136 (IRSGNGLGGSTLTNGGSWTR) is disordered. The FAD site is built by serine 126, asparagine 130, glycine 131, and serine 133. 2 N-linked (GlcNAc...) asparagine glycosylation sites follow: asparagine 184 and asparagine 191. A disulfide bridge connects residues cysteine 187 and cysteine 229. Valine 273 contributes to the FAD binding site. Asparagine 279, asparagine 383, and asparagine 416 each carry an N-linked (GlcNAc...) asparagine glycan. The active-site Proton acceptor is histidine 544. O2 is bound by residues arginine 565 and valine 566. Residues glycine 577 and methionine 589 each coordinate FAD.

This sequence belongs to the GMC oxidoreductase family. Homodimer. It depends on FAD as a cofactor.

It is found in the secreted. Its subcellular location is the cell wall. The protein localises to the cytoplasm. The protein resides in the extracellular space. It localises to the extracellular matrix. It catalyses the reaction beta-D-glucose + O2 = D-glucono-1,5-lactone + H2O2. Glucose oxidase catalyzes the oxidation of beta-D-glucose to D-glucono-delta-lactone and hydrogen peroxide in the presence of molecular oxygen. This chain is Glucose oxidase 1, found in Penicillium expansum (Blue mold rot fungus).